A 134-amino-acid chain; its full sequence is MGKDTIADIITSIRNADMNRKGTVRIGSTNITESIVKILLREGFIENVRKHRENNQYFLILTLRHRRNKKESYKTILNLKRISRPGLRIYSNSQRIPRILGGIGIVILSTSQGIMTDREARLKRIGGEILCYIW.

This sequence belongs to the universal ribosomal protein uS8 family. As to quaternary structure, part of the 30S ribosomal subunit.

The protein localises to the plastid. Its subcellular location is the chloroplast. Functionally, one of the primary rRNA binding proteins, it binds directly to 16S rRNA central domain where it helps coordinate assembly of the platform of the 30S subunit. The sequence is that of Small ribosomal subunit protein uS8c (rps8) from Arabidopsis thaliana (Mouse-ear cress).